A 313-amino-acid polypeptide reads, in one-letter code: Putative stilbene synthase 2 (313 aa).

C88 is a catalytic residue. Residues L191 and 229–231 each bind substrate; that span reads GGP.

It belongs to the thiolase-like superfamily. Chalcone/stilbene synthases family. As to quaternary structure, homodimer.

It is found in the cytoplasm. It catalyses the reaction 4-coumaroyl-CoA + 3 malonyl-CoA + 3 H(+) = trans-resveratrol + 4 CO2 + 4 CoA. The protein operates within phytoalexin biosynthesis; 3,4',5-trihydroxystilbene biosynthesis; 3,4',5-trihydroxystilbene from trans-4-coumarate: step 2/2. The polypeptide is Putative stilbene synthase 2 (Arachis hypogaea (Peanut)).